We begin with the raw amino-acid sequence, 319 residues long: Acetyl-coenzyme A carboxylase carboxyl transferase subunit alpha (319 aa).

The CoA carboxyltransferase C-terminal domain occupies 32-293 (NIQEEISRLQ…HTALAEALQT (262 aa)).

Belongs to the AccA family. Acetyl-CoA carboxylase is a heterohexamer composed of biotin carboxyl carrier protein (AccB), biotin carboxylase (AccC) and two subunits each of ACCase subunit alpha (AccA) and ACCase subunit beta (AccD).

It localises to the cytoplasm. It carries out the reaction N(6)-carboxybiotinyl-L-lysyl-[protein] + acetyl-CoA = N(6)-biotinyl-L-lysyl-[protein] + malonyl-CoA. Its pathway is lipid metabolism; malonyl-CoA biosynthesis; malonyl-CoA from acetyl-CoA: step 1/1. Its function is as follows. Component of the acetyl coenzyme A carboxylase (ACC) complex. First, biotin carboxylase catalyzes the carboxylation of biotin on its carrier protein (BCCP) and then the CO(2) group is transferred by the carboxyltransferase to acetyl-CoA to form malonyl-CoA. The protein is Acetyl-coenzyme A carboxylase carboxyl transferase subunit alpha of Thioalkalivibrio sulfidiphilus (strain HL-EbGR7).